The primary structure comprises 265 residues: Thiazole synthase (265 aa).

Lysine 107 (schiff-base intermediate with DXP) is an active-site residue. Residues glycine 168, 194 to 195 (AG), and 216 to 217 (NT) contribute to the 1-deoxy-D-xylulose 5-phosphate site.

It belongs to the ThiG family. As to quaternary structure, homotetramer. Forms heterodimers with either ThiH or ThiS.

It localises to the cytoplasm. The enzyme catalyses [ThiS sulfur-carrier protein]-C-terminal-Gly-aminoethanethioate + 2-iminoacetate + 1-deoxy-D-xylulose 5-phosphate = [ThiS sulfur-carrier protein]-C-terminal Gly-Gly + 2-[(2R,5Z)-2-carboxy-4-methylthiazol-5(2H)-ylidene]ethyl phosphate + 2 H2O + H(+). It participates in cofactor biosynthesis; thiamine diphosphate biosynthesis. Functionally, catalyzes the rearrangement of 1-deoxy-D-xylulose 5-phosphate (DXP) to produce the thiazole phosphate moiety of thiamine. Sulfur is provided by the thiocarboxylate moiety of the carrier protein ThiS. In vitro, sulfur can be provided by H(2)S. This Pseudomonas aeruginosa (strain LESB58) protein is Thiazole synthase.